The chain runs to 52 residues: Large ribosomal subunit protein bL33 (52 aa).

The protein belongs to the bacterial ribosomal protein bL33 family.

The polypeptide is Large ribosomal subunit protein bL33 (Chlamydia abortus (strain DSM 27085 / S26/3) (Chlamydophila abortus)).